The primary structure comprises 257 residues: uncharacterized protein (257 aa).

Transmembrane regions (helical) follow at residues 5-25 (FLYFITKSISYALFMVLIVTF), 29-49 (LALVGLFLPGIVLMSILGTLI), 53-73 (TLSFYPAWIVGIIGCMCGDWI), 146-166 (LGCILWPPIYFLPGIFTGIAI), 180-200 (IQFLAAILLIWLGIFLLWKLW), and 216-236 (VNLCLLLTISLSAGITIMIYI).

This sequence belongs to the DedA family.

It localises to the cell membrane. This is an uncharacterized protein from Buchnera aphidicola subsp. Baizongia pistaciae (strain Bp).